Here is a 385-residue protein sequence, read N- to C-terminus: MSKCPRCFTALNPNQYLWTLPEQSGGTRYRDEVATAYSGAPADCGPLYTWSRSPGYNGPPPPTSEATRALQAPAVEICPVCHFTLPEGWREGHAICIALAGARATGKSLYIAVLVKQLELLCERFGVSMQPVTRGTAQAYATNYETPLYVQRGLIPPTPTVRTQTSDHREPLMFSLGIWHGVRRFLVLRDVAGEDMESGDLHAPPFRFFAHADAVFFMFDPLRVKTIRDQLHDLLPAQVVSGGDPRTVLTNVLTAVSPGQPKLAVILSKFDVLRALRDVEGSEWGLIMSNGGAAYLRDTSDGQQYDETDGQLLHEEVRSLLLRLHGGSILAAVENPATGVRLQSRNFVVSALGHPPSGNRLHARGIAPFRCVDPIRWVTSGFGVL.

It is found in the cytoplasm. In terms of biological role, may be involved in assembly of the ESX-1 / type VII specialized secretion system (T7SS), which exports several proteins including EsxA and EsxB. Involved in DNA conjugation in recipient (MKD8) strain. This is Putative ESX-1 scaffolding and assembly protein SaeC from Mycolicibacterium smegmatis (strain ATCC 700084 / mc(2)155) (Mycobacterium smegmatis).